The chain runs to 195 residues: MPRAPRTYSKTYSTPKRPYESSRLDAELKLAGEFGLKNKREIYRISFQLSKIRRAARDLLTRDEKDPKRLFEGNALIRRLVRVGVLSEDKKKLDYVLALKVEDFLERRLQTQVYKLGLAKSVHHARVLITQRHIAVGKQIVNIPSFMVRLDSEKHIDFAPTSPFGGARPGRVARRNAARKAEASGEAAEEAEDEE.

An S4 RNA-binding domain is found at 107-181; the sequence is RRLQTQVYKL…VARRNAARKA (75 aa). The tract at residues 161-195 is disordered; it reads TSPFGGARPGRVARRNAARKAEASGEAAEEAEDEE. Lysine 180 is covalently cross-linked (Glycyl lysine isopeptide (Lys-Gly) (interchain with G-Cter in ubiquitin)). Serine 184 is subject to Phosphoserine.

It belongs to the universal ribosomal protein uS4 family. Component of the small ribosomal subunit (SSU). Mature yeast ribosomes consist of a small (40S) and a large (60S) subunit. The 40S small subunit contains 1 molecule of ribosomal RNA (18S rRNA) and 33 different proteins (encoded by 57 genes). The large 60S subunit contains 3 rRNA molecules (25S, 5.8S and 5S rRNA) and 46 different proteins (encoded by 81 genes). Interacts with snoRNA U3. uS11 interacts with MPP10. Component of the ribosomal small subunit (SSU) processome composed of at least 40 protein subunits and snoRNA U3.

The protein resides in the cytoplasm. Its subcellular location is the nucleus. The protein localises to the nucleolus. Functionally, component of the ribosome, a large ribonucleoprotein complex responsible for the synthesis of proteins in the cell. The small ribosomal subunit (SSU) binds messenger RNAs (mRNAs) and translates the encoded message by selecting cognate aminoacyl-transfer RNA (tRNA) molecules. The large subunit (LSU) contains the ribosomal catalytic site termed the peptidyl transferase center (PTC), which catalyzes the formation of peptide bonds, thereby polymerizing the amino acids delivered by tRNAs into a polypeptide chain. The nascent polypeptides leave the ribosome through a tunnel in the LSU and interact with protein factors that function in enzymatic processing, targeting, and the membrane insertion of nascent chains at the exit of the ribosomal tunnel. uS4 is involved in nucleolar processing of pre-18S ribosomal RNA and ribosome assembly. In Saccharomyces cerevisiae (strain ATCC 204508 / S288c) (Baker's yeast), this protein is Small ribosomal subunit protein uS4B.